Consider the following 392-residue polypeptide: Succinate--CoA ligase [ADP-forming] subunit beta (392 aa).

One can recognise an ATP-grasp domain in the interval 9-248 (KDILKKFGVS…TNEEDPFEVE (240 aa)). ATP-binding positions include lysine 50, 57–59 (GRG), glutamate 103, methionine 106, and glutamate 111. Mg(2+)-binding residues include asparagine 203 and aspartate 217. Substrate-binding positions include asparagine 268 and 325 to 327 (GIV).

It belongs to the succinate/malate CoA ligase beta subunit family. As to quaternary structure, heterotetramer of two alpha and two beta subunits. Mg(2+) is required as a cofactor.

It catalyses the reaction succinate + ATP + CoA = succinyl-CoA + ADP + phosphate. It carries out the reaction GTP + succinate + CoA = succinyl-CoA + GDP + phosphate. It functions in the pathway carbohydrate metabolism; tricarboxylic acid cycle; succinate from succinyl-CoA (ligase route): step 1/1. Succinyl-CoA synthetase functions in the citric acid cycle (TCA), coupling the hydrolysis of succinyl-CoA to the synthesis of either ATP or GTP and thus represents the only step of substrate-level phosphorylation in the TCA. The beta subunit provides nucleotide specificity of the enzyme and binds the substrate succinate, while the binding sites for coenzyme A and phosphate are found in the alpha subunit. This is Succinate--CoA ligase [ADP-forming] subunit beta from Chlorobium limicola (strain DSM 245 / NBRC 103803 / 6330).